The sequence spans 242 residues: Transcriptional activator protein RaiR (242 aa).

The 66-residue stretch at 177-242 (KVADLPRLSR…EQLLGPRRSN (66 aa)) folds into the HTH luxR-type domain. The H-T-H motif DNA-binding region spans 201-220 (AKQICARLSISVSAVQLYLA).

It belongs to the autoinducer-regulated transcriptional regulatory protein family.

This Rhizobium etli protein is Transcriptional activator protein RaiR (raiR).